A 259-amino-acid chain; its full sequence is Deoxyribose-phosphate aldolase (259 aa).

Residue Asp102 is the Proton donor/acceptor of the active site. The active-site Schiff-base intermediate with acetaldehyde is Lys167. The active-site Proton donor/acceptor is Lys201.

This sequence belongs to the DeoC/FbaB aldolase family. DeoC type 2 subfamily.

Its subcellular location is the cytoplasm. It carries out the reaction 2-deoxy-D-ribose 5-phosphate = D-glyceraldehyde 3-phosphate + acetaldehyde. The protein operates within carbohydrate degradation; 2-deoxy-D-ribose 1-phosphate degradation; D-glyceraldehyde 3-phosphate and acetaldehyde from 2-deoxy-alpha-D-ribose 1-phosphate: step 2/2. Catalyzes a reversible aldol reaction between acetaldehyde and D-glyceraldehyde 3-phosphate to generate 2-deoxy-D-ribose 5-phosphate. This is Deoxyribose-phosphate aldolase from Escherichia coli (strain SMS-3-5 / SECEC).